The chain runs to 314 residues: tRNA-cytidine(32) 2-sulfurtransferase (314 aa).

The PP-loop motif signature appears at 49–54; it reads SGGKDS. Positions 124, 127, and 215 each coordinate [4Fe-4S] cluster.

This sequence belongs to the TtcA family. In terms of assembly, homodimer. Mg(2+) is required as a cofactor. The cofactor is [4Fe-4S] cluster.

Its subcellular location is the cytoplasm. The catalysed reaction is cytidine(32) in tRNA + S-sulfanyl-L-cysteinyl-[cysteine desulfurase] + AH2 + ATP = 2-thiocytidine(32) in tRNA + L-cysteinyl-[cysteine desulfurase] + A + AMP + diphosphate + H(+). Its pathway is tRNA modification. Functionally, catalyzes the ATP-dependent 2-thiolation of cytidine in position 32 of tRNA, to form 2-thiocytidine (s(2)C32). The sulfur atoms are provided by the cysteine/cysteine desulfurase (IscS) system. The chain is tRNA-cytidine(32) 2-sulfurtransferase from Histophilus somni (strain 2336) (Haemophilus somnus).